Here is a 117-residue protein sequence, read N- to C-terminus: Immunity protein BC_0921 (117 aa).

Probably interacts with cognate toxin BC_0920 but not with other non-cognate toxins. The interaction inhibits the toxic activity of BC_0920.

It is found in the cytoplasm. Functionally, immunity component of an LXG toxin-immunity module. Neutralizes the RNase activity of cognate toxin BC_0920. Probably does not have immunity protein activity on other toxins with the LXG domain. This Bacillus cereus (strain ATCC 14579 / DSM 31 / CCUG 7414 / JCM 2152 / NBRC 15305 / NCIMB 9373 / NCTC 2599 / NRRL B-3711) protein is Immunity protein BC_0921.